Reading from the N-terminus, the 280-residue chain is MPKPYSVKLQYLVPKIALTALAGKLAHLRAGWLTTTVIRWFAKHYRVNMLEAVNPDITSYASFNDFFTRALKPGARPLADAAQLCPVDGAISQFGRIDKDQIFQAKGHHYSTTALLAGNAQMAREYENGYFATIYLSPRDYHRIHMPCDGKLLSMTYVPGDLFSVNPLTAEHVPGLFARNERVVCEFANSEGKFALVLVGATIVGSMATVWHGIVNPPRRGEIQTWHYHDQDIRLKQGEEMGRFLLGSTVVVLYPETAQLRFQPGWHPLRAVSLGEAMAQ.

Active-site charge relay system; for autoendoproteolytic cleavage activity residues include D88, H145, and S248. The Schiff-base intermediate with substrate; via pyruvic acid; for decarboxylase activity role is filled by S248. At S248 the chain carries Pyruvic acid (Ser); by autocatalysis.

The protein belongs to the phosphatidylserine decarboxylase family. PSD-B subfamily. Prokaryotic type I sub-subfamily. In terms of assembly, heterodimer of a large membrane-associated beta subunit and a small pyruvoyl-containing alpha subunit. Requires pyruvate as cofactor. In terms of processing, is synthesized initially as an inactive proenzyme. Formation of the active enzyme involves a self-maturation process in which the active site pyruvoyl group is generated from an internal serine residue via an autocatalytic post-translational modification. Two non-identical subunits are generated from the proenzyme in this reaction, and the pyruvate is formed at the N-terminus of the alpha chain, which is derived from the carboxyl end of the proenzyme. The autoendoproteolytic cleavage occurs by a canonical serine protease mechanism, in which the side chain hydroxyl group of the serine supplies its oxygen atom to form the C-terminus of the beta chain, while the remainder of the serine residue undergoes an oxidative deamination to produce ammonia and the pyruvoyl prosthetic group on the alpha chain. During this reaction, the Ser that is part of the protease active site of the proenzyme becomes the pyruvoyl prosthetic group, which constitutes an essential element of the active site of the mature decarboxylase.

Its subcellular location is the cell membrane. It carries out the reaction a 1,2-diacyl-sn-glycero-3-phospho-L-serine + H(+) = a 1,2-diacyl-sn-glycero-3-phosphoethanolamine + CO2. The protein operates within phospholipid metabolism; phosphatidylethanolamine biosynthesis; phosphatidylethanolamine from CDP-diacylglycerol: step 2/2. In terms of biological role, catalyzes the formation of phosphatidylethanolamine (PtdEtn) from phosphatidylserine (PtdSer). The protein is Phosphatidylserine decarboxylase proenzyme of Methylobacillus flagellatus (strain ATCC 51484 / DSM 6875 / VKM B-1610 / KT).